The following is a 297-amino-acid chain: ATP phosphoribosyltransferase (297 aa).

The protein belongs to the ATP phosphoribosyltransferase family.

The protein localises to the cytoplasm. It carries out the reaction 1-(5-phospho-beta-D-ribosyl)-ATP + diphosphate = 5-phospho-alpha-D-ribose 1-diphosphate + ATP. It functions in the pathway amino-acid biosynthesis; L-histidine biosynthesis; L-histidine from 5-phospho-alpha-D-ribose 1-diphosphate: step 1/9. Functionally, catalyzes the condensation of ATP and 5-phosphoribose 1-diphosphate to form N'-(5'-phosphoribosyl)-ATP (PR-ATP). Has a crucial role in the pathway because the rate of histidine biosynthesis seems to be controlled primarily by regulation of the enzymatic activity. The chain is ATP phosphoribosyltransferase (HIS1) from Kluyveromyces lactis (strain ATCC 8585 / CBS 2359 / DSM 70799 / NBRC 1267 / NRRL Y-1140 / WM37) (Yeast).